The sequence spans 262 residues: Ribosomal RNA small subunit methyltransferase A (262 aa).

Residues histidine 16, leucine 18, glycine 43, glutamate 64, aspartate 89, and asparagine 109 each contribute to the S-adenosyl-L-methionine site.

The protein belongs to the class I-like SAM-binding methyltransferase superfamily. rRNA adenine N(6)-methyltransferase family. RsmA subfamily.

It localises to the cytoplasm. It catalyses the reaction adenosine(1518)/adenosine(1519) in 16S rRNA + 4 S-adenosyl-L-methionine = N(6)-dimethyladenosine(1518)/N(6)-dimethyladenosine(1519) in 16S rRNA + 4 S-adenosyl-L-homocysteine + 4 H(+). Specifically dimethylates two adjacent adenosines (A1518 and A1519) in the loop of a conserved hairpin near the 3'-end of 16S rRNA in the 30S particle. May play a critical role in biogenesis of 30S subunits. The polypeptide is Ribosomal RNA small subunit methyltransferase A (Xanthomonas campestris pv. campestris (strain 8004)).